A 95-amino-acid chain; its full sequence is Large ribosomal subunit protein uL23 (95 aa).

It belongs to the universal ribosomal protein uL23 family. In terms of assembly, part of the 50S ribosomal subunit. Contacts protein L29, and trigger factor when it is bound to the ribosome.

Its function is as follows. One of the early assembly proteins it binds 23S rRNA. One of the proteins that surrounds the polypeptide exit tunnel on the outside of the ribosome. Forms the main docking site for trigger factor binding to the ribosome. The sequence is that of Large ribosomal subunit protein uL23 from Desulfatibacillum aliphaticivorans.